The chain runs to 116 residues: Ig heavy chain V-A1 region BS-5 (116 aa).

Gln-1 is subject to Pyrrolidone carboxylic acid. Positions 1-107 (QSVEESGGRL…LVHLAFVDVW (107 aa)) constitute an Ig-like domain.

The protein is Ig heavy chain V-A1 region BS-5 of Oryctolagus cuniculus (Rabbit).